Here is a 433-residue protein sequence, read N- to C-terminus: MAALSDRQKDELHRAMLAYLHAAGMHNAYAALQHDAALADVDPRDRAVGLLEKKWTSVIRLQKKVIDLENRNAALLAELAAAARPAAPGPFLPRPPPRHTLASHRAPVTRLAFHPTWTLLASASEDATVKLWDWEAGDMERTLKGHTKAVMDVDFDPRGGLMATCSSDLTLKLWDTANQYTNVKTLHGHDHSVSSVRFMPDGETLVSASRDKTIRVWQVSSGYCIKTFSGHAEWVREAVPSEDGRWLVSASNDQTSRIWDFSTGETKMELRGHEHVVECAVFAPVNAYPAIRELAGLKPPAPRDTRAKSPGVYAATGSRDKTIKLWDALSGQCLRTLVGHDNWIRALVFHPSGKYLLSASDDKTIKVWDLANGRCTKTIEAHSHFVTSMTWGRAVGASGGIEKVNGDASSKEPRRINVLATGSVDQTIKVWTP.

A LisH domain is found at 8 to 40; sequence QKDELHRAMLAYLHAAGMHNAYAALQHDAALAD. Positions 57–84 form a coiled coil; the sequence is SVIRLQKKVIDLENRNAALLAELAAAAR. 7 WD repeats span residues 103-144, 146-184, 188-227, 230-269, 272-336, 339-378, and 381-429; these read SHRA…RTLK, HTKAVMDVDFDPRGGLMATCSSDLTLKLWDTANQYTNVK, GHDHSVSSVRFMPDGETLVSASRDKTIRVWQVSSGYCIKT, GHAEWVREAVPSEDGRWLVSASNDQTSRIWDFSTGETKME, GHEH…CLRT, GHDNWIRALVFHPSGKYLLSASDDKTIKVWDLANGRCTKT, and AHSH…QTIK.

The protein belongs to the WD repeat LIS1/nudF family. Self-associates. Interacts with NDL1 and dynein.

It is found in the cytoplasm. The protein resides in the cytoskeleton. Its subcellular location is the spindle pole. Functionally, positively regulates the activity of the minus-end directed microtubule motor protein dynein. Plays a central role in positioning the mitotic spindle at the bud neck during cell division. Targets cytoplasmic dynein to microtubule plus ends, thereby promoting dynein-mediated microtubule sliding along the bud cortex and consequently the movement of the mitotic spindle to the bud neck. The protein is Nuclear distribution protein PAC1 of Cryptococcus neoformans var. neoformans serotype D (strain B-3501A) (Filobasidiella neoformans).